The sequence spans 107 residues: Regulatory protein SoxS (107 aa).

The HTH araC/xylS-type domain occupies 8–106 (QTLIEWIDEH…DRTPSDYRHR (99 aa)). 2 consecutive DNA-binding regions (H-T-H motif) follow at residues 25–46 (DVVA…RTVT) and 73–96 (IFDI…RREF).

The protein resides in the cytoplasm. In terms of biological role, transcriptional activator of the superoxide response regulon of E.coli that includes at least 10 genes such as sodA, nfo, zwf and micF. Binds the DNA sequence 5'-GCACN(7)CAA-3'. It also facilitates the subsequent binding of RNA polymerase to the micF and the nfo promoters. This Salmonella typhimurium (strain LT2 / SGSC1412 / ATCC 700720) protein is Regulatory protein SoxS (soxS).